Here is a 233-residue protein sequence, read N- to C-terminus: Purine nucleoside phosphorylase DeoD-type (233 aa).

An a purine D-ribonucleoside-binding site is contributed by His-4. Phosphate is bound by residues Gly-20, Arg-24, Arg-43, and 87 to 90 (RIGT). A purine D-ribonucleoside contacts are provided by residues 179–181 (EME) and 203–204 (SD). Asp-204 (proton donor) is an active-site residue.

Belongs to the PNP/UDP phosphorylase family. As to quaternary structure, homohexamer; trimer of homodimers.

It catalyses the reaction a purine D-ribonucleoside + phosphate = a purine nucleobase + alpha-D-ribose 1-phosphate. The enzyme catalyses a purine 2'-deoxy-D-ribonucleoside + phosphate = a purine nucleobase + 2-deoxy-alpha-D-ribose 1-phosphate. Its function is as follows. Catalyzes the reversible phosphorolytic breakdown of the N-glycosidic bond in the beta-(deoxy)ribonucleoside molecules, with the formation of the corresponding free purine bases and pentose-1-phosphate. The chain is Purine nucleoside phosphorylase DeoD-type from Helicobacter pylori (strain HPAG1).